Consider the following 145-residue polypeptide: D-aminoacyl-tRNA deacylase (145 aa).

The Gly-cisPro motif, important for rejection of L-amino acids motif lies at 137–138 (GP).

Belongs to the DTD family. Homodimer.

It is found in the cytoplasm. It carries out the reaction glycyl-tRNA(Ala) + H2O = tRNA(Ala) + glycine + H(+). It catalyses the reaction a D-aminoacyl-tRNA + H2O = a tRNA + a D-alpha-amino acid + H(+). Functionally, an aminoacyl-tRNA editing enzyme that deacylates mischarged D-aminoacyl-tRNAs. Also deacylates mischarged glycyl-tRNA(Ala), protecting cells against glycine mischarging by AlaRS. Acts via tRNA-based rather than protein-based catalysis; rejects L-amino acids rather than detecting D-amino acids in the active site. By recycling D-aminoacyl-tRNA to D-amino acids and free tRNA molecules, this enzyme counteracts the toxicity associated with the formation of D-aminoacyl-tRNA entities in vivo and helps enforce protein L-homochirality. This Shewanella loihica (strain ATCC BAA-1088 / PV-4) protein is D-aminoacyl-tRNA deacylase.